Consider the following 268-residue polypeptide: Proteasome subunit beta type-4 (268 aa).

The protein belongs to the peptidase T1B family. The 26S proteasome consists of a 20S proteasome core and two 19S regulatory subunits. The 20S proteasome core is composed of 28 subunits that are arranged in four stacked rings, resulting in a barrel-shaped structure. The two end rings are each formed by seven alpha subunits, and the two central rings are each formed by seven beta subunits. The catalytic chamber with the active sites is on the inside of the barrel.

The protein localises to the cytoplasm. It is found in the nucleus. Its function is as follows. Non-catalytic component of the proteasome, a multicatalytic proteinase complex which is characterized by its ability to cleave peptides with Arg, Phe, Tyr, Leu, and Glu adjacent to the leaving group at neutral or slightly basic pH. The proteasome has an ATP-dependent proteolytic activity. The polypeptide is Proteasome subunit beta type-4 (Prosbeta7) (Drosophila melanogaster (Fruit fly)).